The chain runs to 956 residues: Protein translocase subunit SecA (956 aa).

Residues Gln-87, 105-109 (GEGKT), and Asp-524 contribute to the ATP site. Positions 940, 942, 951, and 952 each coordinate Zn(2+).

It belongs to the SecA family. Monomer and homodimer. Part of the essential Sec protein translocation apparatus which comprises SecA, SecYEG and auxiliary proteins SecDF-YajC and YidC. The cofactor is Zn(2+).

Its subcellular location is the cell inner membrane. The protein resides in the cytoplasm. It catalyses the reaction ATP + H2O + cellular proteinSide 1 = ADP + phosphate + cellular proteinSide 2.. Part of the Sec protein translocase complex. Interacts with the SecYEG preprotein conducting channel. Has a central role in coupling the hydrolysis of ATP to the transfer of proteins into and across the cell membrane, serving both as a receptor for the preprotein-SecB complex and as an ATP-driven molecular motor driving the stepwise translocation of polypeptide chains across the membrane. The sequence is that of Protein translocase subunit SecA from Beijerinckia indica subsp. indica (strain ATCC 9039 / DSM 1715 / NCIMB 8712).